Consider the following 361-residue polypeptide: Basic helix-loop-helix protein 79 (361 aa).

Residues alanine 66–threonine 159 are disordered. Residues glycine 124 to glutamate 138 show a composition bias toward basic and acidic residues. The span at proline 146 to glutamine 157 shows a compositional bias: polar residues. Positions alanine 166–aspartate 173 match the Nuclear localization signal motif. Residues glutamine 170–arginine 183 form a basic motif; degenerate region. One can recognise a bHLH domain in the interval glutamine 170 to leucine 220. Residues glutamate 184–leucine 220 are helix-loop-helix motif.

Belongs to the bHLH protein family. As to quaternary structure, homodimer. Interacts with IBH1.

It localises to the nucleus. Its function is as follows. Together with BCL1, positive regulator of cell elongation at least partially through increased gibberellic acid (GA) biosynthesis. This Oryza sativa subsp. indica (Rice) protein is Basic helix-loop-helix protein 79.